An 892-amino-acid chain; its full sequence is Alanine--tRNA ligase (892 aa).

Residues His596, His600, Cys700, and His704 each coordinate Zn(2+).

It belongs to the class-II aminoacyl-tRNA synthetase family. Zn(2+) is required as a cofactor.

Its subcellular location is the cytoplasm. The catalysed reaction is tRNA(Ala) + L-alanine + ATP = L-alanyl-tRNA(Ala) + AMP + diphosphate. Catalyzes the attachment of alanine to tRNA(Ala) in a two-step reaction: alanine is first activated by ATP to form Ala-AMP and then transferred to the acceptor end of tRNA(Ala). Also edits incorrectly charged Ser-tRNA(Ala) and Gly-tRNA(Ala) via its editing domain. The protein is Alanine--tRNA ligase of Methanococcus maripaludis (strain C6 / ATCC BAA-1332).